Here is a 230-residue protein sequence, read N- to C-terminus: Demethylmenaquinone methyltransferase (230 aa).

Residues Thr57, Asp77, 101–102 (DI), and Ser118 each bind S-adenosyl-L-methionine.

It belongs to the class I-like SAM-binding methyltransferase superfamily. MenG/UbiE family.

The catalysed reaction is a 2-demethylmenaquinol + S-adenosyl-L-methionine = a menaquinol + S-adenosyl-L-homocysteine + H(+). It functions in the pathway quinol/quinone metabolism; menaquinone biosynthesis; menaquinol from 1,4-dihydroxy-2-naphthoate: step 2/2. Functionally, methyltransferase required for the conversion of demethylmenaquinol (DMKH2) to menaquinol (MKH2). The protein is Demethylmenaquinone methyltransferase of Chlamydia caviae (strain ATCC VR-813 / DSM 19441 / 03DC25 / GPIC) (Chlamydophila caviae).